Here is a 252-residue protein sequence, read N- to C-terminus: Ribosomal RNA small subunit methyltransferase J (252 aa).

S-adenosyl-L-methionine is bound by residues 101–102, 117–118, 153–154, and Asp-171; these read RD, ER, and SS.

The protein belongs to the methyltransferase superfamily. RsmJ family.

The protein localises to the cytoplasm. The catalysed reaction is guanosine(1516) in 16S rRNA + S-adenosyl-L-methionine = N(2)-methylguanosine(1516) in 16S rRNA + S-adenosyl-L-homocysteine + H(+). In terms of biological role, specifically methylates the guanosine in position 1516 of 16S rRNA. The chain is Ribosomal RNA small subunit methyltransferase J from Salmonella typhi.